A 125-amino-acid chain; its full sequence is Aldolase FrzH (125 aa).

The catalysed reaction is (2S)-3-(4-methoxyphenyl)-2-[(3S)-3-(methylamino)-8-oxo-1-azaspiro[4.5]decan-1-yl]propanal = (1S,3S,6S,7S,8R)-7-hydroxy-6-[(4-methoxyphenyl)methyl]-3-(methylamino)-5-azatricyclo[6.3.1.0(1,5)]dodecan-9-one. The protein operates within secondary metabolite biosynthesis. In terms of biological role, aldolase; part of the gene cluster that mediates the biosynthesis of the alkaloid (-)-FR901483, a potent immunosuppressant that shows efficacy in animal models and a probable inhibitor of purine nucleotide biosynthesis by targeting phosphoribosylpyrophosphate amidotransferase (PPAT). Within the pathway, FrzH is a new kind of aldolase with no similarities to known aldolases, and which catalyzes the intramolecular aldol condensation via formation of a C9-C3' bond to yield an aza-tricyclic product. The biosynthesis of (-)-FR901483 starts with the condensation of two L-tyrosines to yield (S,S)-dityrosyl-piperazine. This process occurs in 3 steps with the non-canonical nonribosomal peptide synthetase FrzA catalyzing the reduction of L-tyrosine into L-tyrosinal, the spontaneous condensation of 2 L-tyrosinal units, and the subsequent reduction by the NmrA-like family domain-containing oxidoreductase FrzB. The cytochrome P450 monooxygenase FrzC then performs coupling between N10 and C1' to morph the piperazine into a 1,4-diazabicyclo[3.2.1]octane spiro-fused to a 2,5-cyclohexadienone. The dienone portion is further reduced to cyclohexanone by the flavin-dependent reductase FrzD. The methyltranserases (MTs) FrzE and FrzF are then involved in the methylation at the C10' amine and the C4 phenolic oxygen, respectively. The order of the two MTs appear to be interchangeable. Cleavage of the C9-N10' bond by the dioxygenase FrzG then leads to formation of a conjugated iminium. In addition to the oxidation of C9, an additional dehydrogenation between C7 and C8 can occur to give a likely shunt product. The next biosynthetic step is the intramolecular aldol condensation catalyzed by the newly identified aldolase FrzH to yield an aza-tricyclic product with the formation of a C9-C3' bond. The short-chain dehydrogenase/reductase FrzI then produces dephospho-(-)-FR901483 that is phosphorylated at C4'-OH into (-)-FR901483 by the phosphotransferase FrzJ. The chain is Aldolase FrzH from Cladobotryum sp.